We begin with the raw amino-acid sequence, 111 residues long: uncharacterized protein (111 aa).

A run of 2 helical transmembrane segments spans residues 45–65 (AFLI…LLVI) and 91–111 (LPAG…ILHI).

It is found in the cell membrane. This is an uncharacterized protein from Methanothermobacter thermautotrophicus (strain ATCC 29096 / DSM 1053 / JCM 10044 / NBRC 100330 / Delta H) (Methanobacterium thermoautotrophicum).